We begin with the raw amino-acid sequence, 292 residues long: METFVLAHNYQRPDVQLMADSVGDSLELALEAREIDADRIVMCGVDFMAEVVKALNPDREVVVPDHRAACGMAMRLRAKELREFRREHPDAAVVVYVNTSAEVKAEADVMCTSANAVEVVSSLPEDKIIFVPDGNLAAWVQKHVPDKEVIPFPEHGCCPVHHSLSPSDLRELCSQHPDAAVVVHPECPLEVCAMADFVGSTSQIRQYCEKEDASKIVMGTEEGLAFRIRRETGTEVIVPGHMVCPDMKINTGEKVERVLEARHVPEPLRVELDPDLISQVEEVVEEMFRLTR.

Iminosuccinate is bound by residues H8 and S25. C70 contacts [4Fe-4S] cluster. Iminosuccinate is bound by residues 96 to 98 and S113; that span reads YVN. C158 is a [4Fe-4S] cluster binding site. Iminosuccinate is bound by residues 184-186 and T201; that span reads HPE. C244 contacts [4Fe-4S] cluster.

The protein belongs to the quinolinate synthase family. Type 2 subfamily. The cofactor is [4Fe-4S] cluster.

The protein resides in the cytoplasm. It carries out the reaction iminosuccinate + dihydroxyacetone phosphate = quinolinate + phosphate + 2 H2O + H(+). The protein operates within cofactor biosynthesis; NAD(+) biosynthesis; quinolinate from iminoaspartate: step 1/1. Its function is as follows. Catalyzes the condensation of iminoaspartate with dihydroxyacetone phosphate to form quinolinate. The protein is Quinolinate synthase (nadA) of Methanopyrus kandleri (strain AV19 / DSM 6324 / JCM 9639 / NBRC 100938).